The chain runs to 247 residues: 5-oxoprolinase subunit A 1 (247 aa).

It belongs to the LamB/PxpA family. Forms a complex composed of PxpA, PxpB and PxpC.

The enzyme catalyses 5-oxo-L-proline + ATP + 2 H2O = L-glutamate + ADP + phosphate + H(+). Functionally, catalyzes the cleavage of 5-oxoproline to form L-glutamate coupled to the hydrolysis of ATP to ADP and inorganic phosphate. This Ralstonia nicotianae (strain ATCC BAA-1114 / GMI1000) (Ralstonia solanacearum) protein is 5-oxoprolinase subunit A 1.